A 126-amino-acid polypeptide reads, in one-letter code: Large ribosomal subunit protein bL17 (126 aa).

Belongs to the bacterial ribosomal protein bL17 family. In terms of assembly, part of the 50S ribosomal subunit. Contacts protein L32.

This is Large ribosomal subunit protein bL17 from Lactococcus lactis subsp. lactis (strain IL1403) (Streptococcus lactis).